A 108-amino-acid chain; its full sequence is MSGRGKVKSEPMKVVFINTQYVETDARSFKTVVQELTGKNAIVAAGPFDSPSAFDGRCYDGGSKIGEDTRQLHGGGGGGGRMGTTTEFDRLFKEMPHMEELYKLWSEY.

The VQ signature appears at 29–38; the sequence is FKTVVQELTG. Residues 65-85 are disordered; it reads IGEDTRQLHGGGGGGGRMGTT. Residues 73–82 show a composition bias toward gly residues; it reads HGGGGGGGRM.

Interacts with WRKY25, WRKY26 and WRKY33.

Its subcellular location is the nucleus. In terms of biological role, may modulate WRKY transcription factor activities. The protein is VQ motif-containing protein 10 of Arabidopsis thaliana (Mouse-ear cress).